The sequence spans 203 residues: MADPARARKLAVRIREVVASALERGVKDPRLGMVTVTEVRVTPDLVDATVFYTVYGDEDARRASAEALESARGLLRSQVGRATGVKVTPTLTFVHDRLPDDAKHLEDLISVARERDARLAEVRRDARPAGDEDPYRRPRTVDEDDEDEDEDLVDEFDEFDRVEELDADAGDALGGDAGAREAGASAGRQVYPASPGGDPTAGR.

Residues 119-141 (LAEVRRDARPAGDEDPYRRPRTV) are compositionally biased toward basic and acidic residues. Residues 119–203 (LAEVRRDARP…SPGGDPTAGR (85 aa)) form a disordered region. Over residues 142 to 169 (DEDDEDEDEDLVDEFDEFDRVEELDADA) the composition is skewed to acidic residues.

This sequence belongs to the RbfA family. Monomer. Binds 30S ribosomal subunits, but not 50S ribosomal subunits or 70S ribosomes.

Its subcellular location is the cytoplasm. In terms of biological role, one of several proteins that assist in the late maturation steps of the functional core of the 30S ribosomal subunit. Associates with free 30S ribosomal subunits (but not with 30S subunits that are part of 70S ribosomes or polysomes). Required for efficient processing of 16S rRNA. May interact with the 5'-terminal helix region of 16S rRNA. The polypeptide is Ribosome-binding factor A (Frankia alni (strain DSM 45986 / CECT 9034 / ACN14a)).